Consider the following 433-residue polypeptide: 26S proteasome regulatory subunit 7 (433 aa).

A disordered region spans residues 1–22; it reads MPDYLGADQRKTKEDEKDDKPI. A compositionally biased stretch (basic and acidic residues) spans 8–22; it reads DQRKTKEDEKDDKPI. Lysine 116 is modified (N6-acetyllysine). 216–223 is a binding site for ATP; it reads GPPGTGKT. Residue lysine 422 is modified to N6-acetyllysine.

This sequence belongs to the AAA ATPase family. In terms of assembly, component of the 19S proteasome regulatory particle complex. The 26S proteasome consists of a 20S core particle (CP) and two 19S regulatory subunits (RP). The regulatory particle is made of a lid composed of 9 subunits, a base containing 6 ATPases including PSMC2 and few additional components. Interacts with NDC80/HEC; this interaction is detected only during M phase. Interacts and SQSTM1. Interacts with PAAF1. Directly interacts with TRIM5. In terms of processing, monoubiquitinated by RNF181. Phosphorylated. Dephosphorylated by UBLCP1 which impairs PSMC2 ATPase activity and disrupts 26S proteasome assembly.

The protein localises to the cytoplasm. It is found in the nucleus. Its function is as follows. Component of the 26S proteasome, a multiprotein complex involved in the ATP-dependent degradation of ubiquitinated proteins. This complex plays a key role in the maintenance of protein homeostasis by removing misfolded or damaged proteins, which could impair cellular functions, and by removing proteins whose functions are no longer required. Therefore, the proteasome participates in numerous cellular processes, including cell cycle progression, apoptosis, or DNA damage repair. PSMC2 belongs to the heterohexameric ring of AAA (ATPases associated with diverse cellular activities) proteins that unfolds ubiquitinated target proteins that are concurrently translocated into a proteolytic chamber and degraded into peptides. This Pongo abelii (Sumatran orangutan) protein is 26S proteasome regulatory subunit 7 (PSMC2).